The following is a 440-amino-acid chain: uncharacterized protein (440 aa).

10 helical membrane passes run 26–46, 59–79, 96–116, 138–158, 211–231, 241–261, 263–283, 284–304, 394–414, and 418–438; these read NGLIWCWWLFVISLVLASSTF, FVFWILALIFGVAVAFINGVL, FFLGFFFPQMAFCNALWLKLK, LTLSVFVVWGIYCVLATSIYL, FLVFFIIPTITLITLGCYLFA, LRKPLSTLSIVIMLTDVVGII, WIIIDILLIWLNVPFVIFVIF, WVIKLVLPLAMIGTFVSSLTI, FLIIFFSIISLILATIGSVFI, and IVQISIPFYVIGGVIWFFTFI.

It to M.pneumoniae MPN_087.

It is found in the cell membrane. This is an uncharacterized protein from Mycoplasma pneumoniae (strain ATCC 29342 / M129 / Subtype 1) (Mycoplasmoides pneumoniae).